The sequence spans 491 residues: F-box protein At3g59000 (491 aa).

The 49-residue stretch at 1–49 folds into the F-box domain; sequence MDRVGSLPDELLSHILSFLTTKEAALTSLLSKRWRYLIAFVPNLAFDDI.

Part of a SCF (ASK-cullin-F-box) protein ligase complex. Interacts with ASK4.

The protein resides in the nucleus. It participates in protein modification; protein ubiquitination. Component of SCF(ASK-cullin-F-box) E3 ubiquitin ligase complexes, which may mediate the ubiquitination and subsequent proteasomal degradation of target proteins. This is F-box protein At3g59000 from Arabidopsis thaliana (Mouse-ear cress).